The following is a 770-amino-acid chain: uncharacterized protein (770 aa).

Positions 736–770 are disordered; that stretch reads GSGQPGQSPANVGDDPNRMVQSSASQTQIGHVFNN. The span at 754-770 shows a compositional bias: polar residues; that stretch reads MVQSSASQTQIGHVFNN.

This is an uncharacterized protein from Caenorhabditis elegans.